A 547-amino-acid polypeptide reads, in one-letter code: Chaperonin GroEL 1 (547 aa).

ATP contacts are provided by residues 30-33 (TLGP), K51, 87-91 (DGTTT), G415, and D496.

It belongs to the chaperonin (HSP60) family. Forms a cylinder of 14 subunits composed of two heptameric rings stacked back-to-back. Interacts with the co-chaperonin GroES.

Its subcellular location is the cytoplasm. It carries out the reaction ATP + H2O + a folded polypeptide = ADP + phosphate + an unfolded polypeptide.. Functionally, together with its co-chaperonin GroES, plays an essential role in assisting protein folding. The GroEL-GroES system forms a nano-cage that allows encapsulation of the non-native substrate proteins and provides a physical environment optimized to promote and accelerate protein folding. In Rhodopseudomonas palustris (strain BisB18), this protein is Chaperonin GroEL 1.